The primary structure comprises 378 residues: Cytochrome b (378 aa).

Helical transmembrane passes span 34 to 54, 78 to 99, 114 to 134, and 179 to 199; these read FGSLLGLCLIIQILTGLFLAM, WLLRTLHANGASFFFICIYLHV, WLIGVIILFLVMGTAFMGYVL, and FFTFHFILPFIVLAMTMIHLL. Positions 84 and 98 each coordinate heme b. The heme b site is built by His183 and His197. His202 provides a ligand contact to a ubiquinone. Helical transmembrane passes span 227–247, 289–309, 321–341, and 348–368; these read FKDIVGFTVMIFILISLVLIS, LGGVIALVLSIAILMILPFYN, INQVMFWSMLVTVILLTWIGA, and YVLIGQILTVMYFLYYLVNPL.

The protein belongs to the cytochrome b family. As to quaternary structure, the main subunits of complex b-c1 are: cytochrome b, cytochrome c1 and the Rieske protein. Heme b is required as a cofactor.

Its subcellular location is the mitochondrion inner membrane. Its function is as follows. Component of the ubiquinol-cytochrome c reductase complex (complex III or cytochrome b-c1 complex) that is part of the mitochondrial respiratory chain. The b-c1 complex mediates electron transfer from ubiquinol to cytochrome c. Contributes to the generation of a proton gradient across the mitochondrial membrane that is then used for ATP synthesis. This is Cytochrome b (mt:Cyt-b) from Drosophila sechellia (Fruit fly).